A 318-amino-acid chain; its full sequence is Type II methyltransferase M.HaeII (318 aa).

In terms of domain architecture, SAM-dependent MTase C5-type spans 4-304; sequence YKTIDLFAGI…GSMINSLNMA (301 aa). Residue cysteine 73 is part of the active site.

This sequence belongs to the class I-like SAM-binding methyltransferase superfamily. C5-methyltransferase family.

The enzyme catalyses a 2'-deoxycytidine in DNA + S-adenosyl-L-methionine = a 5-methyl-2'-deoxycytidine in DNA + S-adenosyl-L-homocysteine + H(+). A methylase, recognizes the double-stranded sequence 5'-RGCGCY-3', methylates C-? on both strands, and protects the DNA from cleavage by the HaeII endonuclease. The chain is Type II methyltransferase M.HaeII (haeIIM) from Haemophilus aegyptius.